Reading from the N-terminus, the 149-residue chain is SsrA-binding protein (149 aa).

Belongs to the SmpB family.

The protein resides in the cytoplasm. Functionally, required for rescue of stalled ribosomes mediated by trans-translation. Binds to transfer-messenger RNA (tmRNA), required for stable association of tmRNA with ribosomes. tmRNA and SmpB together mimic tRNA shape, replacing the anticodon stem-loop with SmpB. tmRNA is encoded by the ssrA gene; the 2 termini fold to resemble tRNA(Ala) and it encodes a 'tag peptide', a short internal open reading frame. During trans-translation Ala-aminoacylated tmRNA acts like a tRNA, entering the A-site of stalled ribosomes, displacing the stalled mRNA. The ribosome then switches to translate the ORF on the tmRNA; the nascent peptide is terminated with the 'tag peptide' encoded by the tmRNA and targeted for degradation. The ribosome is freed to recommence translation, which seems to be the essential function of trans-translation. The sequence is that of SsrA-binding protein from Anaplasma marginale (strain Florida).